Consider the following 497-residue polypeptide: Thiamine transporter 1 (497 aa).

Methionine 1 is subject to N-acetylmethionine. The Cytoplasmic segment spans residues methionine 1–glutamate 28. A helical transmembrane segment spans residues cysteine 29–leucine 46. The Extracellular portion of the chain corresponds to arginine 47 to glutamate 72. The N-linked (GlcNAc...) asparagine glycan is linked to asparagine 63. The chain crosses the membrane as a helical span at residues isoleucine 73 to alanine 91. Residues threonine 92–proline 99 lie on the Cytoplasmic side of the membrane. The helical transmembrane segment at valine 100 to alanine 118 threads the bilayer. Residues glutamine 119–glutamate 128 are Extracellular-facing. The helical transmembrane segment at phenylalanine 129–valine 149 threads the bilayer. Residues aspartate 150–threonine 165 lie on the Cytoplasmic side of the membrane. The helical transmembrane segment at leucine 166–tryptophan 185 threads the bilayer. Residues serine 186 to asparagine 191 lie on the Extracellular side of the membrane. A helical membrane pass occupies residues valine 192 to leucine 208. At proline 209 to aspartate 285 the chain is on the cytoplasmic side. A Phosphoserine modification is found at serine 222. A helical transmembrane segment spans residues phenylalanine 286–phenylalanine 310. The Extracellular segment spans residues glutamine 311 to glutamate 337. Asparagine 314 is a glycosylation site (N-linked (GlcNAc...) asparagine). A helical membrane pass occupies residues alanine 338–isoleucine 354. At lysine 355–glutamate 363 the chain is on the cytoplasmic side. Residues methionine 364–methionine 380 form a helical membrane-spanning segment. The Extracellular portion of the chain corresponds to aspartate 381 to isoleucine 386. Residues tryptophan 387–phenylalanine 409 form a helical membrane-spanning segment. The Cytoplasmic segment spans residues glutamine 410–arginine 419. Residues tyrosine 420–valine 443 traverse the membrane as a helical segment. The Extracellular portion of the chain corresponds to aspartate 444–glutamine 455. Residues phenylalanine 456–methionine 479 traverse the membrane as a helical segment. Topologically, residues lysine 480–serine 497 are cytoplasmic.

Belongs to the reduced folate carrier (RFC) transporter (TC 2.A.48) family. Interacts with TSPAN1; this interaction increases the stability of SLC19A2. Interacts with TMEM63B. Ubiquitous; most abundant in skeletal and cardiac muscle. Medium expression in placenta, heart, liver and kidney, low in lung.

The protein resides in the cell membrane. It carries out the reaction thiamine(out) + H(+)(in) = thiamine(in) + H(+)(out). It catalyses the reaction pyridoxine(out) + n H(+)(out) = pyridoxine(in) + n H(+)(in). Pyridoxine transport is inhibited by carbonyl cyanide p-trifluoromethoxyphenylhydrazone (FCCP) and carbonyl cyanide m-chlorophenylhydrazone (CCCP). High-affinity transporter for the intake of thiamine. Mediates H(+)-dependent pyridoxine transport. This is Thiamine transporter 1 (SLC19A2) from Homo sapiens (Human).